The sequence spans 482 residues: tRNA sulfurtransferase (482 aa).

The region spanning 61-165 (QQVLEILTTT…DDKLNQILAH (105 aa)) is the THUMP domain. Residues 183 to 184 (LI), Lys265, Gly287, and Gln296 each bind ATP. A disulfide bond links Cys344 and Cys456. Residues 404–482 (IEEHAVVLDI…GFNNVKVYRP (79 aa)) enclose the Rhodanese domain. Cys456 acts as the Cysteine persulfide intermediate in catalysis.

Belongs to the ThiI family.

It is found in the cytoplasm. It catalyses the reaction [ThiI sulfur-carrier protein]-S-sulfanyl-L-cysteine + a uridine in tRNA + 2 reduced [2Fe-2S]-[ferredoxin] + ATP + H(+) = [ThiI sulfur-carrier protein]-L-cysteine + a 4-thiouridine in tRNA + 2 oxidized [2Fe-2S]-[ferredoxin] + AMP + diphosphate. The catalysed reaction is [ThiS sulfur-carrier protein]-C-terminal Gly-Gly-AMP + S-sulfanyl-L-cysteinyl-[cysteine desulfurase] + AH2 = [ThiS sulfur-carrier protein]-C-terminal-Gly-aminoethanethioate + L-cysteinyl-[cysteine desulfurase] + A + AMP + 2 H(+). Its pathway is cofactor biosynthesis; thiamine diphosphate biosynthesis. In terms of biological role, catalyzes the ATP-dependent transfer of a sulfur to tRNA to produce 4-thiouridine in position 8 of tRNAs, which functions as a near-UV photosensor. Also catalyzes the transfer of sulfur to the sulfur carrier protein ThiS, forming ThiS-thiocarboxylate. This is a step in the synthesis of thiazole, in the thiamine biosynthesis pathway. The sulfur is donated as persulfide by IscS. This is tRNA sulfurtransferase from Vibrio vulnificus (strain YJ016).